The primary structure comprises 97 residues: Exodeoxyribonuclease 7 small subunit (97 aa).

The segment at 1 to 22 (MAKTASPGDTAAGNGTEPLPDK) is disordered.

Belongs to the XseB family. As to quaternary structure, heterooligomer composed of large and small subunits.

It is found in the cytoplasm. The enzyme catalyses Exonucleolytic cleavage in either 5'- to 3'- or 3'- to 5'-direction to yield nucleoside 5'-phosphates.. In terms of biological role, bidirectionally degrades single-stranded DNA into large acid-insoluble oligonucleotides, which are then degraded further into small acid-soluble oligonucleotides. The chain is Exodeoxyribonuclease 7 small subunit from Burkholderia vietnamiensis (strain G4 / LMG 22486) (Burkholderia cepacia (strain R1808)).